The following is a 101-amino-acid chain: MNKSKRLFTKSKRSFRRRLPPIQSGDRIDYRNMSLISRFISEQGKILSRRVNRVTLKQQRLITIAIKQARILSLLPFLNNQKQFERSESTPRTTSLRTRKK.

The protein belongs to the bacterial ribosomal protein bS18 family. As to quaternary structure, part of the 30S ribosomal subunit.

The protein resides in the plastid. Its subcellular location is the chloroplast. The sequence is that of Small ribosomal subunit protein bS18c (rps18) from Arabidopsis thaliana (Mouse-ear cress).